The primary structure comprises 1032 residues: ATPase MORC2 (1032 aa).

N-acetylalanine is present on Ala-2. ATP contacts are provided by residues Asn-39, 87–89 (SAK), and 99–105 (QYGNGLK). A Mg(2+)-binding site is contributed by Asn-39. The stretch at 282–362 (SRFKTRAEQE…KEAKQRALKE (81 aa)) forms a coiled coil. An ATP-binding site is contributed by Lys-427. The CW-type zinc finger occupies 490–544 (AMEIPTTIQCDLCLKWRTLPFQLSSVEKDYPDTWVCSMNPDPEQDRCEASEQKQK). Residues Cys-499, Cys-502, Cys-525, and Cys-536 each coordinate Zn(2+). Disordered regions lie at residues 530-563 (DPEQ…KQKQ) and 577-793 (ALQK…RAQK). 2 stretches are compositionally biased toward basic and acidic residues: residues 532 to 543 (EQDRCEASEQKQ) and 550 to 563 (FRKD…KQKQ). Positions 547-584 (LGTFRKDMKTQEEKQKQLTEKIRQQQEKLEALQKTTPI) form a coiled coil. Residue Thr-582 is modified to Phosphothreonine. A phosphoserine mark is found at Ser-602 and Ser-615. The segment covering 627–638 (SRPPSLPTPRPA) has biased composition (pro residues). Lys-652 participates in a covalent cross-link: Glycyl lysine isopeptide (Lys-Gly) (interchain with G-Cter in SUMO2). Positions 690 to 704 (PLVQQLSPSLLPNSK) are enriched in low complexity. Ser-696 is modified (phosphoserine). A Glycyl lysine isopeptide (Lys-Gly) (interchain with G-Cter in SUMO2) cross-link involves residue Lys-704. Ser-705 is subject to Phosphoserine. Low complexity predominate over residues 711-720 (SPKVIKTPVV). Lys-716 is covalently cross-linked (Glycyl lysine isopeptide (Lys-Gly) (interchain with G-Cter in SUMO2)). Phosphoserine is present on residues Ser-725 and Ser-730. Residue Thr-733 is modified to Phosphothreonine. Ser-739 carries the phosphoserine; by PAK1 modification. Residues 741–761 (AVSDEEEVEEEAERRKERCKR) are a coiled coil. Ser-743 is modified (phosphoserine). Over residues 765-774 (VVKEEKKDSN) the composition is skewed to basic and acidic residues. Residue Lys-767 forms a Glycyl lysine isopeptide (Lys-Gly) (interchain with G-Cter in SUMO2) linkage. Ser-777 and Ser-779 each carry phosphoserine. Lys-819 is covalently cross-linked (Glycyl lysine isopeptide (Lys-Gly) (interchain with G-Cter in SUMO2)). Residues 850 to 870 (RLMKPPSPEHQSLDTQQEGGE) are disordered. A Glycyl lysine isopeptide (Lys-Gly) (interchain with G-Cter in SUMO2) cross-link involves residue Lys-932. Positions 966–1016 (QSRADSRAKASEESLRTSERKLRETEEKLQKLRTNIVALLQKVQEDIDINT) form a coiled coil.

Homodimerizes upon ATP-binding and dissociate upon ATP hydrolysis; homodimerization is required for gene silencing. Interacts with HDAC4. Interacts with ACLY. Interacts with TASOR and MPHOSPH8; the interactions associate MORC2 with the HUSH complex which recruits MORC2 to heterochromatic loci. Phosphorylated by PAK1 at Ser-739 upon DNA damage. Phosphorylation is required for ATPase activity and recruitment to damaged chromatin. Highly expressed in smooth muscle, pancreas and testis.

The protein localises to the nucleus. Its subcellular location is the cytoplasm. The protein resides in the cytosol. It is found in the chromosome. It localises to the nucleus matrix. The catalysed reaction is ATP + H2O = ADP + phosphate + H(+). With respect to regulation, ATPase activity is dependent of phosphorylation by PAK1 and presence of DNA. Its function is as follows. Essential for epigenetic silencing by the HUSH (human silencing hub) complex. Recruited by HUSH to target site in heterochromatin, the ATPase activity and homodimerization are critical for HUSH-mediated silencing. Represses germ cell-related genes and L1 retrotransposons in collaboration with SETDB1 and the HUSH complex, the silencing is dependent of repressive epigenetic modifications, such as H3K9me3 mark. Silencing events often occur within introns of transcriptionally active genes, and lead to the down-regulation of host gene expression. During DNA damage response, regulates chromatin remodeling through ATP hydrolysis. Upon DNA damage, is phosphorylated by PAK1, both colocalize to chromatin and induce H2AX expression. ATPase activity is required and dependent of phosphorylation by PAK1 and presence of DNA. Recruits histone deacetylases, such as HDAC4, to promoter regions, causing local histone H3 deacetylation and transcriptional repression of genes such as CA9. Exhibits a cytosolic function in lipogenesis, adipogenic differentiation, and lipid homeostasis by increasing the activity of ACLY, possibly preventing its dephosphorylation. The protein is ATPase MORC2 of Homo sapiens (Human).